The sequence spans 275 residues: MTLQQQIIKALGAKPQINAEEEIRRSVDFLKSYLQTYPFIKSLVLGISGGQDSTLAGKLCQMAINELRQETRNESLQFIAVRLPYGVQADEQDCQDAIAFIQPDRVLTVNIKGAVLASEQALREAGIELSDFVRGNEKARERMKAQYSIAGMTSGVVVGTDHAAEAITGFFTKYGDGGTDINPLYRLNKRQGKQLLTALGCPEHLYKKAPTADLEDDRPSLPDEVALGVTYDNIDDYLEGKNLPEQVARTIENWYLKTEHKRRPPINVFDDFWKK.

46 to 53 (GISGGQDS) serves as a coordination point for ATP. Aspartate 52 is a Mg(2+) binding site. Arginine 140 contributes to the deamido-NAD(+) binding site. Threonine 160 contributes to the ATP binding site. Glutamate 165 provides a ligand contact to Mg(2+). Deamido-NAD(+) is bound by residues lysine 173 and aspartate 180. ATP is bound by residues lysine 189 and threonine 211. 260-261 (HK) is a deamido-NAD(+) binding site.

Belongs to the NAD synthetase family. As to quaternary structure, homodimer.

The catalysed reaction is deamido-NAD(+) + NH4(+) + ATP = AMP + diphosphate + NAD(+) + H(+). The protein operates within cofactor biosynthesis; NAD(+) biosynthesis; NAD(+) from deamido-NAD(+) (ammonia route): step 1/1. In terms of biological role, catalyzes the ATP-dependent amidation of deamido-NAD to form NAD. Uses ammonia as a nitrogen source. This chain is NH(3)-dependent NAD(+) synthetase, found in Shigella flexneri serotype 5b (strain 8401).